The sequence spans 660 residues: Poly(A)-specific ribonuclease PARN (660 aa).

The a divalent metal cation site is built by Asp-28 and Glu-30. Residues Arg-177–Asp-243 form the R3H domain. Residues Asp-290 and Asp-380 each contribute to the a divalent metal cation site. Phosphoserine is present on residues Ser-560 and Ser-614. A disordered region spans residues Ala-606–Trp-660. A compositionally biased stretch (basic residues) spans Lys-633 to Lys-642. Residue Ser-643 is modified to Phosphoserine. A Phosphothreonine modification is found at Thr-649.

The protein belongs to the CAF1 family. A divalent metal cation serves as cofactor.

Its subcellular location is the cytoplasm. It is found in the nucleus. The catalysed reaction is Exonucleolytic cleavage of poly(A) to 5'-AMP.. 3'-exoribonuclease that has a preference for poly(A) tails of mRNAs, thereby efficiently degrading poly(A) tails. Exonucleolytic degradation of the poly(A) tail is often the first step in the decay of eukaryotic mRNAs and is also used to silence certain maternal mRNAs translationally during oocyte maturation and early embryonic development. The polypeptide is Poly(A)-specific ribonuclease PARN (parn) (Danio rerio (Zebrafish)).